Reading from the N-terminus, the 146-residue chain is Deoxyuridine 5'-triphosphate nucleotidohydrolase (146 aa).

Residues 65 to 67 (RSG), asparagine 78, and 82 to 84 (TID) each bind substrate.

This sequence belongs to the dUTPase family. Mg(2+) is required as a cofactor.

It catalyses the reaction dUTP + H2O = dUMP + diphosphate + H(+). It participates in pyrimidine metabolism; dUMP biosynthesis; dUMP from dCTP (dUTP route): step 2/2. Functionally, this enzyme is involved in nucleotide metabolism: it produces dUMP, the immediate precursor of thymidine nucleotides and it decreases the intracellular concentration of dUTP so that uracil cannot be incorporated into DNA. The chain is Deoxyuridine 5'-triphosphate nucleotidohydrolase from Treponema pallidum subsp. pallidum (strain SS14).